A 272-amino-acid polypeptide reads, in one-letter code: 2-amino-3,7-dideoxy-D-threo-hept-6-ulosonate synthase (272 aa).

Asp33 serves as the catalytic Proton acceptor. 1-deoxy-D-threo-hexo-2,5-diulose 6-phosphate is bound by residues 33 to 37 (DHGVS) and 153 to 155 (YPR). The active-site Proton donor is Tyr153. Residue Lys184 is the Schiff-base intermediate with substrate of the active site. 1-deoxy-D-threo-hexo-2,5-diulose 6-phosphate is bound by residues 209-210 (GG) and 237-238 (GR).

Belongs to the DeoC/FbaB aldolase family. ADHS subfamily. In terms of assembly, homodecamer.

The enzyme catalyses 1-deoxy-D-threo-hexo-2,5-diulose 6-phosphate + L-aspartate 4-semialdehyde = 2,3-dioxopropyl phosphate + 2-amino-2,3,7-trideoxy-D-lyxo-hept-6-ulosonate. Functionally, catalyzes a transaldol reaction between 6-deoxy-5-ketofructose 1-phosphate (DKFP) and L-aspartate semialdehyde (ASA) with an elimination of hydroxypyruvaldehyde phosphate to yield 2-amino-3,7-dideoxy-D-threo-hept-6-ulosonate (ADH). Plays a key role in an alternative pathway of the biosynthesis of 3-dehydroquinate (DHQ), which is involved in the canonical pathway for the biosynthesis of aromatic amino acids and which is also a precursor for the biosynthesis of p-aminobenzoic acid (PABA) in M.maripaludis. Does not possess fructose-bisphosphate (FBP) aldolase activity. The chain is 2-amino-3,7-dideoxy-D-threo-hept-6-ulosonate synthase from Methanococcus maripaludis (strain DSM 14266 / JCM 13030 / NBRC 101832 / S2 / LL).